A 292-amino-acid polypeptide reads, in one-letter code: MFDFASYHRAATLADAINLLADNPQAKLLAGGTDVLIQLHHHNDRYRHIVDIHNLAELRGITLAEDGSLRIGSATTFTQLIEDSITQRHLPALCAAASSIAGPQIRNVATYGGNICNGATSADSATPTLIYDAKLEIHSPRGVRFVPINGFHTGPGKVSLEHDEILVAFHFPPQPKEHVGSAHFKYAMRDAMDISTIGCAAHCRLDNGNFSELRLAFGVAAPTPIRCQHAEQTAQNAPLNLQTLEAISESVLQDVAPRSSWRASKEFRLHLIQTMTKKVISEAVAAAGGKLQ.

The FAD-binding PCMH-type domain occupies 1-176; that stretch reads MFDFASYHRA…VAFHFPPQPK (176 aa). Residues 27-34, 109-113, isoleucine 165, and phenylalanine 184 contribute to the FAD site; these read KLLAGGTD and ATYGG.

As to quaternary structure, heterotrimer of XdhA, XdhB and XdhC. The cofactor is FAD.

It carries out the reaction xanthine + NAD(+) + H2O = urate + NADH + H(+). The catalysed reaction is hypoxanthine + NAD(+) + H2O = xanthine + NADH + H(+). It participates in purine metabolism; hypoxanthine degradation; urate from hypoxanthine: step 1/2. It functions in the pathway purine metabolism; hypoxanthine degradation; urate from hypoxanthine: step 2/2. Its function is as follows. Presumed to be a dehydrogenase, but possibly an oxidase. Participates in limited purine salvage (requires aspartate) but does not support aerobic growth on purines as the sole carbon source (purine catabolism). The sequence is that of Xanthine dehydrogenase FAD-binding subunit (xdhB) from Escherichia coli O157:H7.